The following is a 313-amino-acid chain: Beta-ketoacyl-[acyl-carrier-protein] synthase III (313 aa).

Active-site residues include Cys112 and His238. Residues 239–243 (QANIR) form an ACP-binding region. Asn268 is a catalytic residue.

The protein belongs to the thiolase-like superfamily. FabH family. In terms of assembly, homodimer.

Its subcellular location is the cytoplasm. It carries out the reaction malonyl-[ACP] + acetyl-CoA + H(+) = 3-oxobutanoyl-[ACP] + CO2 + CoA. It participates in lipid metabolism; fatty acid biosynthesis. Functionally, catalyzes the condensation reaction of fatty acid synthesis by the addition to an acyl acceptor of two carbons from malonyl-ACP. Catalyzes the first condensation reaction which initiates fatty acid synthesis and may therefore play a role in governing the total rate of fatty acid production. Possesses both acetoacetyl-ACP synthase and acetyl transacylase activities. Its substrate specificity determines the biosynthesis of branched-chain and/or straight-chain of fatty acids. The sequence is that of Beta-ketoacyl-[acyl-carrier-protein] synthase III from Staphylococcus aureus (strain COL).